Here is a 200-residue protein sequence, read N- to C-terminus: Transgelin (200 aa).

A2 carries the post-translational modification N-acetylalanine. Residues 24–137 (DELEDRLVEW…RTLVALGSLA (114 aa)) enclose the Calponin-homology (CH) domain. The Calponin-like repeat unit spans residues 175–199 (IGLQMGTNKGASQAGMSYGRPRQII).

This sequence belongs to the calponin family. As to quaternary structure, monomer. Gizzard, uterus, intestine, esophagus, aorta, and trace amounts in brain, liver and heart.

Its subcellular location is the cytoplasm. Functionally, actin cross-linking/gelling protein. The polypeptide is Transgelin (TAGLN) (Gallus gallus (Chicken)).